A 115-amino-acid chain; its full sequence is HTH-type transcriptional regulator SarR (115 aa).

The H-T-H motif DNA-binding region spans 51-74 (SKEIAKCSEFKPYYLTKALQKLKD).

This sequence belongs to the SarA family. In terms of assembly, homodimer.

The protein resides in the cytoplasm. In terms of biological role, negative regulator of sarA transcription at late exponential and stationary growth phases. It contributes to the modulation of target genes downstream of the sarA regulatory cascade. Also, positively regulates expression of primary transcripts RNAII and RNAIII generated by agr (virulence accessory gene regulator) locus. This chain is HTH-type transcriptional regulator SarR (sarR), found in Staphylococcus aureus (strain NCTC 8325 / PS 47).